A 204-amino-acid chain; its full sequence is MATQAAGIFSPAITTTTSAVKKLHLFSSSHRPKSLSFTKTAIRAEKTESSSAAPAVKEAPVGFTPPQLDPNTPSPIFAGSTGGLLRKAQVEEFYVITWNSPKEQIFEMPTGGAAIMREGPNLLKLARKEQCLALGTRLRSKYKITYQFYRVFPNGEVQYLHPKDGVYPEKANPGREGVGLNMRSIGKNVSPIEVKFTGKQSYDL.

The transit peptide at 1 to 44 (MATQAAGIFSPAITTTTSAVKKLHLFSSSHRPKSLSFTKTAIRA) directs the protein to the chloroplast. Thr47 is subject to Phosphothreonine. Residues 47-71 (TESSSAAPAVKEAPVGFTPPQLDPN) are disordered. Residues 137–145 (RLRSKYKIT) form a ferredoxin and ferredoxin-oxidoreductase binding region.

This sequence belongs to the PsaD family. In terms of assembly, interacts with CURT1C.

The protein localises to the plastid. It localises to the chloroplast thylakoid membrane. In terms of biological role, PSAD can form complexes with ferredoxin and ferredoxin-oxidoreductase in photosystem I (PS I) reaction center. PSAD may encode the ferredoxin-docking protein. This Arabidopsis thaliana (Mouse-ear cress) protein is Photosystem I reaction center subunit II-2, chloroplastic (PSAD2).